Reading from the N-terminus, the 455-residue chain is Probable glucarate dehydratase (455 aa).

Substrate is bound by residues H42, T113, Y160, and K215. K217 (proton acceptor) is an active-site residue. Mg(2+) is bound by residues D245, E276, and N299. 245–247 lines the substrate pocket; the sequence is DPN. Substrate is bound by residues N299, 349–351, H378, and R431; that span reads HSN. H349 serves as the catalytic Proton acceptor.

This sequence belongs to the mandelate racemase/muconate lactonizing enzyme family. GlucD subfamily. Mg(2+) serves as cofactor.

It carries out the reaction D-glucarate = 5-dehydro-4-deoxy-D-glucarate + H2O. The protein operates within carbohydrate acid metabolism; D-glucarate degradation; 2,5-dioxopentanoate from D-glucarate: step 1/2. Functionally, catalyzes the dehydration of glucarate to 5-keto-4-deoxy-D-glucarate (5-kdGluc). The polypeptide is Probable glucarate dehydratase (gudD) (Bacillus subtilis (strain 168)).